Consider the following 209-residue polypeptide: Thiamine-phosphate synthase (209 aa).

Residues 38–42 (QYRAK) and Asn70 each bind 4-amino-2-methyl-5-(diphosphooxymethyl)pyrimidine. Asp71 and Asp90 together coordinate Mg(2+). 4-amino-2-methyl-5-(diphosphooxymethyl)pyrimidine is bound at residue Ser109. 135–137 (TST) contacts 2-[(2R,5Z)-2-carboxy-4-methylthiazol-5(2H)-ylidene]ethyl phosphate. A 4-amino-2-methyl-5-(diphosphooxymethyl)pyrimidine-binding site is contributed by Lys138. 2-[(2R,5Z)-2-carboxy-4-methylthiazol-5(2H)-ylidene]ethyl phosphate-binding positions include Gly165 and 185–186 (VS).

Belongs to the thiamine-phosphate synthase family. Requires Mg(2+) as cofactor.

It carries out the reaction 2-[(2R,5Z)-2-carboxy-4-methylthiazol-5(2H)-ylidene]ethyl phosphate + 4-amino-2-methyl-5-(diphosphooxymethyl)pyrimidine + 2 H(+) = thiamine phosphate + CO2 + diphosphate. The enzyme catalyses 2-(2-carboxy-4-methylthiazol-5-yl)ethyl phosphate + 4-amino-2-methyl-5-(diphosphooxymethyl)pyrimidine + 2 H(+) = thiamine phosphate + CO2 + diphosphate. The catalysed reaction is 4-methyl-5-(2-phosphooxyethyl)-thiazole + 4-amino-2-methyl-5-(diphosphooxymethyl)pyrimidine + H(+) = thiamine phosphate + diphosphate. Its pathway is cofactor biosynthesis; thiamine diphosphate biosynthesis; thiamine phosphate from 4-amino-2-methyl-5-diphosphomethylpyrimidine and 4-methyl-5-(2-phosphoethyl)-thiazole: step 1/1. Condenses 4-methyl-5-(beta-hydroxyethyl)thiazole monophosphate (THZ-P) and 2-methyl-4-amino-5-hydroxymethyl pyrimidine pyrophosphate (HMP-PP) to form thiamine monophosphate (TMP). This is Thiamine-phosphate synthase from Persephonella marina (strain DSM 14350 / EX-H1).